The primary structure comprises 328 residues: Chlorate reductase subunit beta (328 aa).

4Fe-4S ferredoxin-type domains lie at 6-35 (VAYV…RDGR), 125-156 (NHSF…KRPE), and 158-187 (GIVV…FNLQ). C15, C18, C21, C25, C134, C137, and C142 together coordinate [4Fe-4S] cluster. C146, C167, and C173 together coordinate [3Fe-4S] cluster. Positions 177, 194, 197, 209, and 213 each coordinate [4Fe-4S] cluster.

As to quaternary structure, heterotrimer of alpha, beta and gamma subunits. It depends on [3Fe-4S] cluster as a cofactor. Requires [4Fe-4S] cluster as cofactor.

It localises to the periplasm. Functionally, electron transfer subunit of the terminal reductase during anaerobic growth on chlorate. This Ideonella dechloratans protein is Chlorate reductase subunit beta (clrB).